Consider the following 1036-residue polypeptide: Multiple C2 domain and transmembrane region protein 2 (1036 aa).

The C2 1 domain occupies 1–110 (MRNTTKLVVH…YKDDQVYQRF (110 aa)). Disordered stretches follow at residues 137 to 204 (DQTF…PVQK) and 225 to 246 (RENPHEAQKPMSRGANQLHPQN). Residues 146-155 (PYTSPTQASA) are compositionally biased toward polar residues. The span at 158–168 (TEEDTADSETE) shows a compositional bias: acidic residues. Over residues 190–204 (VEGKKSEEVKEPVQK) the composition is skewed to basic and acidic residues. C2 domains lie at 277–399 (PNAG…PQWY), 440–563 (VHGE…SRWF), and 607–734 (YISD…THSF). Ca(2+) is bound by residues aspartate 316, aspartate 364, glutamate 366, and aspartate 372. 2 consecutive transmembrane segments (helical) span residues 871 to 891 (FILVMYPELILPTMFLYMFFI) and 979 to 999 (LFILFCLAASVVLYAMPFKAI).

The protein belongs to the MCTP family. Requires Ca(2+) as cofactor. As to expression, expressed in the vascular tissues of roots and rosette leaves. Accumulates in roots meristems. Observed in flowers.

Its subcellular location is the cell membrane. Functionally, may function as a signaling molecule by regulating the trafficking of other regulators. This is Multiple C2 domain and transmembrane region protein 2 from Arabidopsis thaliana (Mouse-ear cress).